Consider the following 317-residue polypeptide: Adenine deaminase (317 aa).

Residues His-14, His-16, and His-194 each contribute to the Zn(2+) site. Residue Glu-197 is the Proton donor of the active site. Position 275 (Asp-275) interacts with Zn(2+). A substrate-binding site is contributed by Asp-276.

It belongs to the metallo-dependent hydrolases superfamily. Adenosine and AMP deaminases family. Adenine deaminase type 2 subfamily. Zn(2+) serves as cofactor.

The catalysed reaction is adenine + H2O + H(+) = hypoxanthine + NH4(+). Functionally, catalyzes the hydrolytic deamination of adenine to hypoxanthine. Plays an important role in the purine salvage pathway and in nitrogen catabolism. This is Adenine deaminase from Pseudomonas syringae pv. syringae (strain B728a).